The primary structure comprises 185 residues: Large ribosomal subunit protein uL5 (185 aa).

Belongs to the universal ribosomal protein uL5 family. In terms of assembly, part of the 50S ribosomal subunit; part of the 5S rRNA/L5/L18/L25 subcomplex. Contacts the 5S rRNA and the P site tRNA. Forms a bridge to the 30S subunit in the 70S ribosome.

Functionally, this is one of the proteins that bind and probably mediate the attachment of the 5S RNA into the large ribosomal subunit, where it forms part of the central protuberance. In the 70S ribosome it contacts protein S13 of the 30S subunit (bridge B1b), connecting the 2 subunits; this bridge is implicated in subunit movement. Contacts the P site tRNA; the 5S rRNA and some of its associated proteins might help stabilize positioning of ribosome-bound tRNAs. The chain is Large ribosomal subunit protein uL5 from Protochlamydia amoebophila (strain UWE25).